The sequence spans 255 residues: MSAFTIIIPARYGSSRLPGKPLLDIAGKPMIAHVYDRARESLAKRIYVATDDARIAEAVEGFGGSVLMTRADHPSGTDRLAECADTLELDDDEIVVNVQGDEPMLPAELISQVANNLAANPQAGIATLCERIHDRETLFNPNAVKVVKNEAGMALYFSRAPIPWARDYFADADAGLPPTYDFYRHIGIYAYRVGFLRDYVTWGSCPLEGIESLEQLRAMWRGVPIHVDVAAKAPPAGVDTEADLQRVRAVMAKSS.

This sequence belongs to the KdsB family.

The protein localises to the cytoplasm. It catalyses the reaction 3-deoxy-alpha-D-manno-oct-2-ulosonate + CTP = CMP-3-deoxy-beta-D-manno-octulosonate + diphosphate. The protein operates within nucleotide-sugar biosynthesis; CMP-3-deoxy-D-manno-octulosonate biosynthesis; CMP-3-deoxy-D-manno-octulosonate from 3-deoxy-D-manno-octulosonate and CTP: step 1/1. Its pathway is bacterial outer membrane biogenesis; lipopolysaccharide biosynthesis. Its function is as follows. Activates KDO (a required 8-carbon sugar) for incorporation into bacterial lipopolysaccharide in Gram-negative bacteria. In Hahella chejuensis (strain KCTC 2396), this protein is 3-deoxy-manno-octulosonate cytidylyltransferase.